A 172-amino-acid chain; its full sequence is MAEKRNIFLVGPMGAGKSTIGRHLAQQLHMEFVDSDTVIEERTGADIAWVFDVEGEEGFRKREEAVLEDLTQEQGIVLATGGGSVKSKENRNRLSARGVVVYLETTIEKQLARTNRDKKRPLLQTDNPREVLESLAGERNPLYEEVADYTVRTDDQSAKVVANQIVKMLEER.

14–19 (GAGKST) lines the ATP pocket. Serine 18 provides a ligand contact to Mg(2+). Residues aspartate 36, arginine 60, and glycine 82 each contribute to the substrate site. Arginine 120 is an ATP binding site. Arginine 139 contacts substrate. ATP is bound at residue glutamine 156.

The protein belongs to the shikimate kinase family. In terms of assembly, monomer. Requires Mg(2+) as cofactor.

The protein localises to the cytoplasm. It carries out the reaction shikimate + ATP = 3-phosphoshikimate + ADP + H(+). Its pathway is metabolic intermediate biosynthesis; chorismate biosynthesis; chorismate from D-erythrose 4-phosphate and phosphoenolpyruvate: step 5/7. In terms of biological role, catalyzes the specific phosphorylation of the 3-hydroxyl group of shikimic acid using ATP as a cosubstrate. This Vibrio campbellii (strain ATCC BAA-1116) protein is Shikimate kinase.